A 227-amino-acid chain; its full sequence is PKHD-type hydroxylase ACICU_00484 (227 aa).

Residues 78-178 (DIIPPLFNRY…RIASFFWVQS (101 aa)) enclose the Fe2OG dioxygenase domain. Fe cation contacts are provided by histidine 96, aspartate 98, and histidine 159. A 2-oxoglutarate-binding site is contributed by arginine 169.

The cofactor is Fe(2+). L-ascorbate is required as a cofactor.

The polypeptide is PKHD-type hydroxylase ACICU_00484 (Acinetobacter baumannii (strain ACICU)).